The primary structure comprises 598 residues: Elongation factor 4 (598 aa).

Positions 4 to 181 constitute a tr-type G domain; the sequence is KKIRNFAIIA…AIVNLIPPPQ (178 aa). Residues 16 to 21 and 128 to 131 each bind GTP; these read DHGKST and NKID.

It belongs to the TRAFAC class translation factor GTPase superfamily. Classic translation factor GTPase family. LepA subfamily.

The protein localises to the cell membrane. The enzyme catalyses GTP + H2O = GDP + phosphate + H(+). Its function is as follows. Required for accurate and efficient protein synthesis under certain stress conditions. May act as a fidelity factor of the translation reaction, by catalyzing a one-codon backward translocation of tRNAs on improperly translocated ribosomes. Back-translocation proceeds from a post-translocation (POST) complex to a pre-translocation (PRE) complex, thus giving elongation factor G a second chance to translocate the tRNAs correctly. Binds to ribosomes in a GTP-dependent manner. This chain is Elongation factor 4, found in Mesomycoplasma hyopneumoniae (strain 7448) (Mycoplasma hyopneumoniae).